A 546-amino-acid polypeptide reads, in one-letter code: Chaperonin GroEL (546 aa).

ATP is bound by residues 29–32, Lys50, 86–90, Gly414, and Asp492; these read TMGP and DGTTT.

It belongs to the chaperonin (HSP60) family. Forms a cylinder of 14 subunits composed of two heptameric rings stacked back-to-back. Interacts with the co-chaperonin GroES.

Its subcellular location is the cytoplasm. The enzyme catalyses ATP + H2O + a folded polypeptide = ADP + phosphate + an unfolded polypeptide.. Its function is as follows. Together with its co-chaperonin GroES, plays an essential role in assisting protein folding. The GroEL-GroES system forms a nano-cage that allows encapsulation of the non-native substrate proteins and provides a physical environment optimized to promote and accelerate protein folding. The sequence is that of Chaperonin GroEL from Helicobacter pylori (strain ATCC 700392 / 26695) (Campylobacter pylori).